A 117-amino-acid polypeptide reads, in one-letter code: Large ribosomal subunit protein bL20 (117 aa).

This sequence belongs to the bacterial ribosomal protein bL20 family.

Binds directly to 23S ribosomal RNA and is necessary for the in vitro assembly process of the 50S ribosomal subunit. It is not involved in the protein synthesizing functions of that subunit. The chain is Large ribosomal subunit protein bL20 (rplT) from Rickettsia prowazekii (strain Madrid E).